We begin with the raw amino-acid sequence, 356 residues long: Peptide chain release factor 1 (356 aa).

Gln-233 carries the post-translational modification N5-methylglutamine.

This sequence belongs to the prokaryotic/mitochondrial release factor family. Post-translationally, methylated by PrmC. Methylation increases the termination efficiency of RF1.

The protein resides in the cytoplasm. Functionally, peptide chain release factor 1 directs the termination of translation in response to the peptide chain termination codons UAG and UAA. In Shouchella clausii (strain KSM-K16) (Alkalihalobacillus clausii), this protein is Peptide chain release factor 1.